A 413-amino-acid chain; its full sequence is Probable inactive allantoicase (413 aa).

It belongs to the allantoicase family.

In terms of biological role, the function of this enzyme is unclear as allantoicase activity is not known to exist in mammals. The chain is Probable inactive allantoicase from Rattus norvegicus (Rat).